Reading from the N-terminus, the 335-residue chain is Foldase protein PrsA (335 aa).

The signal sequence occupies residues 1–22 (MRSAKKLLSVLCLGVFILTFTA). Residue C23 is the site of N-palmitoyl cysteine attachment. C23 is lipidated: S-diacylglycerol cysteine. One can recognise a PpiC domain in the interval 194 to 285 (PNTMNVSHIL…FGYHIIKINS (92 aa)).

The protein belongs to the PrsA family.

The protein localises to the cell membrane. It carries out the reaction [protein]-peptidylproline (omega=180) = [protein]-peptidylproline (omega=0). Functionally, plays a major role in protein secretion by helping the post-translocational extracellular folding of several secreted proteins. This Clostridium botulinum (strain Loch Maree / Type A3) protein is Foldase protein PrsA.